The sequence spans 271 residues: Chitinase 6 (271 aa).

The first 20 residues, 1 to 20 (MARRLSLLAVVLAMVAAVSA), serve as a signal peptide directing secretion. Residues 25–60 (AQSCGCASDQCCSKWGFCGTGSDYCGTGCQAGPCDV) enclose the Chitin-binding type-1 domain. 6 disulfide bridges follow: C28-C36, C30-C42, C35-C49, C88-C137, C150-C159, and C239-C271. E132 acts as the Proton donor in catalysis. An N-linked (GlcNAc...) asparagine glycan is attached at N268.

This sequence belongs to the glycosyl hydrolase 19 family. Chitinase class IV subfamily. As to expression, expressed in roots, leaves, sheaths and meristems.

It carries out the reaction Random endo-hydrolysis of N-acetyl-beta-D-glucosaminide (1-&gt;4)-beta-linkages in chitin and chitodextrins.. Its function is as follows. May function in reproductive organs during embryogenesis and seed maturation. In Oryza sativa subsp. japonica (Rice), this protein is Chitinase 6 (Cht6).